The primary structure comprises 1454 residues: Beta-1,3-glucan-binding protein (1454 aa).

Positions Met1–Asn197 are excised as a propeptide. N-linked (GlcNAc...) asparagine glycosylation is found at Asn33, Asn55, Asn185, Asn571, Asn592, Asn825, Asn882, and Asn1153.

The protein belongs to the glycosyl hydrolase 16 family. As to quaternary structure, monomer. As to expression, expressed in the hepatopancreas and secreted into the hemolymph. Expressed at lower levels in muscle, pleopod and gill tissue.

It localises to the secreted. Its function is as follows. Involved in the recognition of invading microorganisms. Binds specifically to beta-1,3-glucan and activates the prophenoloxidase cascade. The sequence is that of Beta-1,3-glucan-binding protein from Penaeus vannamei (Whiteleg shrimp).